We begin with the raw amino-acid sequence, 150 residues long: Small ribosomal subunit protein bS6 (150 aa).

A disordered region spans residues 99-150 (GPSAMLQKRDRDDRGERGERGFGGGGFGGGRDREDRPRRGRDREEAATEETF). Basic and acidic residues-rich tracts occupy residues 105 to 118 (QKRD…RGER) and 128 to 144 (GRDR…REEA).

The protein belongs to the bacterial ribosomal protein bS6 family.

Functionally, binds together with bS18 to 16S ribosomal RNA. This chain is Small ribosomal subunit protein bS6, found in Azorhizobium caulinodans (strain ATCC 43989 / DSM 5975 / JCM 20966 / LMG 6465 / NBRC 14845 / NCIMB 13405 / ORS 571).